A 93-amino-acid chain; its full sequence is Small ribosomal subunit protein uS19 (93 aa).

The protein belongs to the universal ribosomal protein uS19 family.

Functionally, protein S19 forms a complex with S13 that binds strongly to the 16S ribosomal RNA. The sequence is that of Small ribosomal subunit protein uS19 from Microcystis aeruginosa (strain NIES-843 / IAM M-2473).